Reading from the N-terminus, the 252-residue chain is uncharacterized protein (252 aa).

2 positions are modified to phosphoserine: Ser195 and Ser209.

Testis-specific. Highly expressed in spermatocytes (at protein level).

In terms of biological role, essential for normal spermatogenesis and male fertility. This is an uncharacterized protein from Mus musculus (Mouse).